Consider the following 21-residue polypeptide: Neuropeptide gamma (21 aa).

The interval 1–21 is disordered; it reads SSANPQITRKRHKINSFVGLM. Methionine 21 is subject to Methionine amide.

It belongs to the tachykinin family.

It localises to the secreted. Tachykinins are active peptides which excite neurons, evoke behavioral responses, and contract (directly or indirectly) many smooth muscles. Is a potent vasoconstrictor and secretagogue that plays a regulatory role in the central control of ventilation, in particular, the heart rate variability (HRV). The protein is Neuropeptide gamma of Oncorhynchus mykiss (Rainbow trout).